We begin with the raw amino-acid sequence, 380 residues long: 1-deoxy-D-xylulose 5-phosphate reductoisomerase 2 (380 aa).

NADPH-binding residues include serine 10, glycine 11, serine 12, isoleucine 13, glycine 36, lysine 37, asparagine 38, and asparagine 120. Lysine 121 is a binding site for 1-deoxy-D-xylulose 5-phosphate. Glutamate 122 provides a ligand contact to NADPH. Residue aspartate 146 participates in Mn(2+) binding. 1-deoxy-D-xylulose 5-phosphate is bound by residues serine 147, glutamate 148, serine 172, and histidine 195. Residue glutamate 148 participates in Mn(2+) binding. Glycine 201 is an NADPH binding site. 1-deoxy-D-xylulose 5-phosphate is bound by residues serine 208, asparagine 213, lysine 214, and glutamate 217. Glutamate 217 is a binding site for Mn(2+).

Belongs to the DXR family. It depends on Mg(2+) as a cofactor. Requires Mn(2+) as cofactor.

It carries out the reaction 2-C-methyl-D-erythritol 4-phosphate + NADP(+) = 1-deoxy-D-xylulose 5-phosphate + NADPH + H(+). Its pathway is isoprenoid biosynthesis; isopentenyl diphosphate biosynthesis via DXP pathway; isopentenyl diphosphate from 1-deoxy-D-xylulose 5-phosphate: step 1/6. Its function is as follows. Catalyzes the NADPH-dependent rearrangement and reduction of 1-deoxy-D-xylulose-5-phosphate (DXP) to 2-C-methyl-D-erythritol 4-phosphate (MEP). This is 1-deoxy-D-xylulose 5-phosphate reductoisomerase 2 from Bacillus thuringiensis subsp. konkukian (strain 97-27).